The sequence spans 748 residues: Structure-specific endonuclease subunit SLX4 (748 aa).

Residues 50–102 (LSSDDDSISTQVKSVTAQKSPITQETTKNDTERNKDVDKSCNPVSTSQPDLGE) form a disordered region. Positions 57-75 (ISTQVKSVTAQKSPITQET) are enriched in polar residues. Thr-72 is subject to Phosphothreonine; by ATR and ATM. Basic and acidic residues predominate over residues 76 to 88 (TKNDTERNKDVDK). A Phosphothreonine; by ATR and ATM modification is found at Thr-113. 2 disordered regions span residues 215-236 (IKTQ…KGEK) and 277-303 (EKSS…PPEL). The segment covering 222-236 (NSDKPPRARNNKGEK) has biased composition (basic and acidic residues). Residues 277 to 291 (EKSSSSLDNQESSQQ) are compositionally biased toward low complexity. At Ser-289 the chain carries Phosphoserine; by ATR and ATM. Phosphothreonine; by ATR and ATM is present on Thr-319. A phosphoserine; by ATR and ATM mark is found at Ser-329 and Ser-355.

The protein belongs to the SLX4 family. Forms a heterodimer with SLX1. Interacts with RAD1; catalytic subunit of the RAD1-RAD10 endonuclease. Interacts with RTT107. Phosphorylated by ATR (MEC1) and ATM (TEL1) upon DNA damage. This appears to be required for the function with the RAD1-RAD10 endonuclease.

The protein resides in the nucleus. It is found in the cytoplasm. Its function is as follows. Regulatory subunit that interacts with and increases the activity of different structure-specific endonucleases. Has several distinct roles in protecting genome stability by resolving diverse forms of deleterious DNA structures. Component of the SLX1-SLX4 structure-specific endonuclease that resolves DNA secondary structures generated during DNA repair and recombination. Has endonuclease activity towards branched DNA substrates, introducing single-strand cuts in duplex DNA close to junctions with ss-DNA. Has a preference for simple Y, 5'-flap and replication fork-like structures. It cleaves the strand bearing the 5'-non-homologous arm at the branch site junction and generates ligatable, nicked products from the 5'-flap or replication fork substrates. Plays a critical role in maintaining the integrity of the ribosomal DNA (rDNA) loci, where it has a role in re-starting stalled replication forks. Has Holliday junction resolvase activity in vitro. Interacts with the structure-specific RAD1-RAD10 endonuclease and promotes RAD1-RAD10-dependent 3'-non-homologous tail removal (NHTR) during repair of double-strand breaks by single-strand annealing. SLX4 also promotes recovery from DNA-alkylation-induced replisome stalling during DNA replication by facilitating the error-free mode of lesion bypass. This does not require SLX1 or RAD1-RAD10, but probably RTT107. The chain is Structure-specific endonuclease subunit SLX4 from Saccharomyces cerevisiae (strain YJM789) (Baker's yeast).